An 873-amino-acid polypeptide reads, in one-letter code: Bifunctional heparan sulfate N-deacetylase/N-sulfotransferase 3 (873 aa).

Topologically, residues 1–13 are cytoplasmic; that stretch reads MSFIMKLHRHFQR. Residues 14–34 form a helical; Signal-anchor for type II membrane protein membrane-spanning segment; the sequence is TVILLATFCMVSIIISAYYLY. Topologically, residues 35–873 are lumenal; it reads SGYKQENELS…WLRQELQKVR (839 aa). Residues 36–589 form a heparan sulfate N-deacetylase 3 region; sequence GYKQENELSE…KRHRDIWSKE (554 aa). N-linked (GlcNAc...) asparagine glycosylation is found at Asn-146, Asn-226, Asn-342, and Asn-392. A heparan sulfate N-sulfotransferase 3 region spans residues 590–873; it reads KTCDRLPKFL…WLRQELQKVR (284 aa). The For sulfotransferase activity role is filled by Lys-605. 605–609 lines the 3'-phosphoadenylyl sulfate pocket; it reads KTGTT. N-linked (GlcNAc...) asparagine glycosylation occurs at Asn-658. 3'-phosphoadenylyl sulfate is bound at residue Ser-703. A glycan (N-linked (GlcNAc...) asparagine) is linked at Asn-794. A disulfide bridge links Cys-809 with Cys-819. Residue 824–828 coordinates 3'-phosphoadenylyl sulfate; sequence KGRKY.

The protein belongs to the sulfotransferase 1 family. NDST subfamily. As to quaternary structure, monomer. In terms of tissue distribution, expressed in brain, kidney, liver, fetal and adult lung, adult pancreas, placenta, fetal spleen and fetal thymus. Not detected in adult/ fetal heart and skeletal muscle.

The protein localises to the golgi apparatus membrane. It catalyses the reaction alpha-D-glucosaminyl-[heparan sulfate](n) + 3'-phosphoadenylyl sulfate = N-sulfo-alpha-D-glucosaminyl-[heparan sulfate](n) + adenosine 3',5'-bisphosphate + 2 H(+). It participates in glycan metabolism; heparan sulfate biosynthesis. It functions in the pathway glycan metabolism; heparin biosynthesis. Its function is as follows. Essential bifunctional enzyme that catalyzes both the N-deacetylation and the N-sulfation of glucosamine (GlcNAc) of the glycosaminoglycan in heparan sulfate. Modifies the GlcNAc-GlcA disaccharide repeating sugar backbone to make N-sulfated heparosan, a prerequisite substrate for later modifications in heparin biosynthesis. Has high deacetylase activity but low sulfotransferase activity. This chain is Bifunctional heparan sulfate N-deacetylase/N-sulfotransferase 3, found in Homo sapiens (Human).